Here is a 110-residue protein sequence, read N- to C-terminus: Multidrug transporter PA4990 (110 aa).

Transmembrane regions (helical) follow at residues 7–27 (LAIAIAAEVVATTSLKAVAGF), 31–51 (LPLLLVVGGYVLAFSMLVLVM), 58–78 (VVYAIWSGLGIVLVSLVAMFV), and 85–105 (PAALLGIGLIIAGVLVIQLFS).

The protein belongs to the drug/metabolite transporter (DMT) superfamily. Small multidrug resistance (SMR) (TC 2.A.7.1) family.

It localises to the cell membrane. In terms of biological role, confers resistance to ethidium bromide, acriflavine and methyl viologen. This is Multidrug transporter PA4990 from Pseudomonas aeruginosa (strain ATCC 15692 / DSM 22644 / CIP 104116 / JCM 14847 / LMG 12228 / 1C / PRS 101 / PAO1).